The primary structure comprises 405 residues: tRNA-specific 2-thiouridylase MnmA (405 aa).

Residues 41–48 (AMSGGVDS) and Leu67 each bind ATP. The active-site Nucleophile is the Cys135. A disulfide bond links Cys135 and Cys231. Gly159 is a binding site for ATP. The tract at residues 181–183 (KDQ) is interaction with tRNA. Cys231 functions as the Cysteine persulfide intermediate in the catalytic mechanism.

The protein belongs to the MnmA/TRMU family.

It localises to the cytoplasm. It carries out the reaction S-sulfanyl-L-cysteinyl-[protein] + uridine(34) in tRNA + AH2 + ATP = 2-thiouridine(34) in tRNA + L-cysteinyl-[protein] + A + AMP + diphosphate + H(+). Functionally, catalyzes the 2-thiolation of uridine at the wobble position (U34) of tRNA, leading to the formation of s(2)U34. This is tRNA-specific 2-thiouridylase MnmA from Maricaulis maris (strain MCS10) (Caulobacter maris).